A 309-amino-acid polypeptide reads, in one-letter code: Ornithine carbamoyltransferase (309 aa).

Carbamoyl phosphate contacts are provided by residues 57–60, glutamine 84, arginine 108, and 135–138; these read STRT and HPCQ. L-ornithine contacts are provided by residues asparagine 166, aspartate 226, and 230 to 231; that span reads SM. Carbamoyl phosphate contacts are provided by residues 265–266 and arginine 293; that span reads CL.

This sequence belongs to the aspartate/ornithine carbamoyltransferase superfamily. OTCase family.

It localises to the cytoplasm. It catalyses the reaction carbamoyl phosphate + L-ornithine = L-citrulline + phosphate + H(+). Its pathway is amino-acid biosynthesis; L-arginine biosynthesis; L-arginine from L-ornithine and carbamoyl phosphate: step 1/3. In terms of biological role, reversibly catalyzes the transfer of the carbamoyl group from carbamoyl phosphate (CP) to the N(epsilon) atom of ornithine (ORN) to produce L-citrulline. This Rhizorhabdus wittichii (strain DSM 6014 / CCUG 31198 / JCM 15750 / NBRC 105917 / EY 4224 / RW1) (Sphingomonas wittichii) protein is Ornithine carbamoyltransferase.